The following is a 155-amino-acid chain: Ribosomal RNA large subunit methyltransferase H (155 aa).

Residues L72, G103, and L122 to L127 each bind S-adenosyl-L-methionine.

Belongs to the RNA methyltransferase RlmH family. Homodimer.

The protein localises to the cytoplasm. The catalysed reaction is pseudouridine(1915) in 23S rRNA + S-adenosyl-L-methionine = N(3)-methylpseudouridine(1915) in 23S rRNA + S-adenosyl-L-homocysteine + H(+). Its function is as follows. Specifically methylates the pseudouridine at position 1915 (m3Psi1915) in 23S rRNA. The sequence is that of Ribosomal RNA large subunit methyltransferase H from Haemophilus influenzae (strain PittGG).